A 346-amino-acid polypeptide reads, in one-letter code: Ion-translocating oxidoreductase complex subunit D (346 aa).

A run of 4 helical transmembrane segments spans residues 20–40 (IMIQ…TFFG), 42–62 (GIII…GVVL), 69–91 (LASR…SLPP), and 120–140 (PFNP…VQMT). An FMN phosphoryl threonine modification is found at Thr187. A run of 5 helical transmembrane segments spans residues 212–232 (ASAG…YLIW), 242–262 (LSLL…APVV), 264–284 (APPL…FIAT), 290–310 (AATV…VWLI), and 314–334 (GGYP…VPLI).

This sequence belongs to the NqrB/RnfD family. In terms of assembly, the complex is composed of six subunits: RnfA, RnfB, RnfC, RnfD, RnfE and RnfG. FMN serves as cofactor.

The protein localises to the cell inner membrane. Part of a membrane-bound complex that couples electron transfer with translocation of ions across the membrane. This is Ion-translocating oxidoreductase complex subunit D from Sodalis glossinidius (strain morsitans).